A 151-amino-acid chain; its full sequence is Transcriptional regulator MraZ (151 aa).

SpoVT-AbrB domains lie at 7–53 (EYDC…SQTE) and 82–125 (INEV…SPDL).

Belongs to the MraZ family. As to quaternary structure, forms oligomers.

The protein resides in the cytoplasm. It localises to the nucleoid. The sequence is that of Transcriptional regulator MraZ from Cytophaga hutchinsonii (strain ATCC 33406 / DSM 1761 / CIP 103989 / NBRC 15051 / NCIMB 9469 / D465).